The chain runs to 545 residues: Sulfite oxidase, mitochondrial (545 aa).

The N-terminal 79 residues, 1–79, are a transit peptide targeting the mitochondrion; it reads MLLLHRAVVL…YQDHRCRAAQ (79 aa). The Cytochrome b5 heme-binding domain occupies 82-161; sequence TRIYTKEEVS…LAQYKVGELN (80 aa). His118 provides a ligand contact to heme b. Residue Ser123 is modified to Phosphoserine. 3 residues coordinate heme b: His143, Gln145, and His147. The segment at 165-174 is hinge; sequence KVAPTVETSD. A moco domain region spans residues 175–401; sequence PYADDPVRHP…YSHWQRRDYK (227 aa). Mo-molybdopterin-binding positions include 215-219, Cys264, Asp322, His361, Arg366, and 377-379; these read FTRNH and HVK. The tract at residues 402–538 is homodimerization; that stretch reads GFSPSVDWDT…RGVLSNAWHR (137 aa).

As to quaternary structure, homodimer. It depends on heme b as a cofactor. Mo-molybdopterin serves as cofactor.

It localises to the mitochondrion intermembrane space. The catalysed reaction is sulfite + O2 + H2O = sulfate + H2O2. Its pathway is energy metabolism; sulfur metabolism. In terms of biological role, catalyzes the oxidation of sulfite to sulfate, the terminal reaction in the oxidative degradation of sulfur-containing amino acids. This Macaca fascicularis (Crab-eating macaque) protein is Sulfite oxidase, mitochondrial (SUOX).